The chain runs to 360 residues: Protein phosphatase 1 regulatory subunit 7 (360 aa).

The tract at residues 1–65 (MAAERGAGQQ…DEDPEEGQEL (65 aa)) is disordered. The residue at position 2 (alanine 2) is an N-acetylalanine. Phosphoserine occurs at positions 12, 24, 27, 44, and 47. The segment covering 17–34 (EVDRRVESEESGDEEGKK) has biased composition (basic and acidic residues). The span at 53-63 (ERGDEDPEEGQ) shows a compositional bias: acidic residues. LRR repeat units follow at residues 77–98 (DAEDVDLNHYRIGKIEGFEVLK), 99–120 (KVKTLCLRQNLIKCIENLEGLQ), 121–142 (SLRELDLYDNQIRRIENLDALT), 143–164 (ELEVLDISFNLLRNIEGIDKLT), 165–186 (RLKKLFLVNNKINKIENISSLH), 187–208 (QLQMLELGSNRIRAIENIDTLT), 209–230 (NLESLFLGKNKITKLQNLDALT), 231–252 (NLTVLSMQSNRLTKIEGLQSLV), 253–274 (NLRELYLSHNGIEVIEGLDNNN), 275–296 (KLTMLDIASNRIKKIENVSHLT), and 297–318 (ELQEFWMNDNLLDCWSDLDELK). Phosphoserine is present on serine 322. In terms of domain architecture, LRRCT spans 331–360 (NPLQRDPQYRRKIMLALPSVRQIDATFVRF).

Belongs to the SDS22 family. Interacts with PPP1CA, PPP1CB and PPP1CC/PPP1G. Interacts with PPP1CC isoform 2 in motile caudal epididymal spermatozoa. In terms of tissue distribution, expressed in epididymal spermatozoa including the principal piece of the flagellum and the head-neck junction.

The protein resides in the nucleus. Regulatory subunit of protein phosphatase 1. Inactivates the PPP1CC isoform 2 during epididymal sperm maturation. The sequence is that of Protein phosphatase 1 regulatory subunit 7 (PPP1R7) from Bos taurus (Bovine).